We begin with the raw amino-acid sequence, 28 residues long: Chassatide C12 (28 aa).

Positions 1 to 28 form a cross-link, cyclopeptide (Glu-Asn); sequence EYCGESCYLIPCFTPGCYCVSRQCVNKN. Disulfide bonds link Cys3–Cys17, Cys7–Cys19, and Cys12–Cys24.

This is a cyclic peptide. Expressed in fruit, pedicel, leaf and stem but not in root (at protein level).

Functionally, probably participates in a plant defense mechanism. In Chassalia chartacea (Chassalia curviflora), this protein is Chassatide C12.